We begin with the raw amino-acid sequence, 96 residues long: Myoglobin (96 aa).

One can recognise a Globin domain in the interval 1–96 (GLSDGEWQLV…AKTKELGFLG (96 aa)). Phosphoserine is present on Ser3. His61 contacts nitrite. Residue His61 participates in O2 binding. Thr64 is subject to Phosphothreonine.

This sequence belongs to the globin family. Monomeric.

It localises to the cytoplasm. The protein resides in the sarcoplasm. The enzyme catalyses Fe(III)-heme b-[protein] + nitric oxide + H2O = Fe(II)-heme b-[protein] + nitrite + 2 H(+). It carries out the reaction H2O2 + AH2 = A + 2 H2O. In terms of biological role, monomeric heme protein which primary function is to store oxygen and facilitate its diffusion within muscle tissues. Reversibly binds oxygen through a pentacoordinated heme iron and enables its timely and efficient release as needed during periods of heightened demand. Depending on the oxidative conditions of tissues and cells, and in addition to its ability to bind oxygen, it also has a nitrite reductase activity whereby it regulates the production of bioactive nitric oxide. Under stress conditions, like hypoxia and anoxia, it also protects cells against reactive oxygen species thanks to its pseudoperoxidase activity. This is Myoglobin (MB) from Ailuropoda melanoleuca (Giant panda).